We begin with the raw amino-acid sequence, 358 residues long: Peptide chain release factor 1 (358 aa).

Q233 is subject to N5-methylglutamine.

This sequence belongs to the prokaryotic/mitochondrial release factor family. In terms of processing, methylated by PrmC. Methylation increases the termination efficiency of RF1.

It is found in the cytoplasm. Functionally, peptide chain release factor 1 directs the termination of translation in response to the peptide chain termination codons UAG and UAA. The chain is Peptide chain release factor 1 from Staphylococcus epidermidis (strain ATCC 35984 / DSM 28319 / BCRC 17069 / CCUG 31568 / BM 3577 / RP62A).